A 378-amino-acid chain; its full sequence is uncharacterized protein (378 aa).

Residues 1–11 are compositionally biased toward polar residues; it reads MSQQTTPAEQK. The segment at 1–33 is disordered; it reads MSQQTTPAEQKSLQRKKPPFRADQVGSLLRSEP.

The protein to B.subtilis YxjH.

This is an uncharacterized protein from Bacillus subtilis (strain 168).